We begin with the raw amino-acid sequence, 383 residues long: Acetylornithine deacetylase (383 aa).

Histidine 80 is a Zn(2+) binding site. Residue aspartate 82 is part of the active site. Aspartate 112 is a Zn(2+) binding site. Glutamate 144 is an active-site residue. 3 residues coordinate Zn(2+): glutamate 145, glutamate 169, and histidine 355.

Belongs to the peptidase M20A family. ArgE subfamily. Homodimer. It depends on Zn(2+) as a cofactor. Requires Co(2+) as cofactor. Glutathione is required as a cofactor.

It is found in the cytoplasm. It carries out the reaction N(2)-acetyl-L-ornithine + H2O = L-ornithine + acetate. It functions in the pathway amino-acid biosynthesis; L-arginine biosynthesis; L-ornithine from N(2)-acetyl-L-ornithine (linear): step 1/1. In terms of biological role, catalyzes the hydrolysis of the amide bond of N(2)-acetylated L-amino acids. Cleaves the acetyl group from N-acetyl-L-ornithine to form L-ornithine, an intermediate in L-arginine biosynthesis pathway, and a branchpoint in the synthesis of polyamines. This Shigella sonnei (strain Ss046) protein is Acetylornithine deacetylase.